The primary structure comprises 438 residues: UDP-N-acetylmuramoylalanine--D-glutamate ligase (438 aa).

112–118 (GSNGKST) contacts ATP.

Belongs to the MurCDEF family.

It is found in the cytoplasm. The enzyme catalyses UDP-N-acetyl-alpha-D-muramoyl-L-alanine + D-glutamate + ATP = UDP-N-acetyl-alpha-D-muramoyl-L-alanyl-D-glutamate + ADP + phosphate + H(+). It functions in the pathway cell wall biogenesis; peptidoglycan biosynthesis. Cell wall formation. Catalyzes the addition of glutamate to the nucleotide precursor UDP-N-acetylmuramoyl-L-alanine (UMA). The sequence is that of UDP-N-acetylmuramoylalanine--D-glutamate ligase from Pectobacterium atrosepticum (strain SCRI 1043 / ATCC BAA-672) (Erwinia carotovora subsp. atroseptica).